The primary structure comprises 275 residues: Dermonecrotic toxin SpeSicTox-betaIIA1 (275 aa).

His5 is an active-site residue. Mg(2+) contacts are provided by Glu25 and Asp27. His41 serves as the catalytic Nucleophile. Cystine bridges form between Cys45/Cys51 and Cys47/Cys190. Asp85 serves as a coordination point for Mg(2+).

The protein belongs to the arthropod phospholipase D family. Class II subfamily. Requires Mg(2+) as cofactor. As to expression, expressed by the venom gland.

The protein localises to the secreted. The enzyme catalyses an N-(acyl)-sphingosylphosphocholine = an N-(acyl)-sphingosyl-1,3-cyclic phosphate + choline. It carries out the reaction an N-(acyl)-sphingosylphosphoethanolamine = an N-(acyl)-sphingosyl-1,3-cyclic phosphate + ethanolamine. It catalyses the reaction a 1-acyl-sn-glycero-3-phosphocholine = a 1-acyl-sn-glycero-2,3-cyclic phosphate + choline. The catalysed reaction is a 1-acyl-sn-glycero-3-phosphoethanolamine = a 1-acyl-sn-glycero-2,3-cyclic phosphate + ethanolamine. Dermonecrotic toxins cleave the phosphodiester linkage between the phosphate and headgroup of certain phospholipids (sphingolipid and lysolipid substrates), forming an alcohol (often choline) and a cyclic phosphate. This toxin acts on sphingomyelin (SM). It may also act on ceramide phosphoethanolamine (CPE), lysophosphatidylcholine (LPC) and lysophosphatidylethanolamine (LPE), but not on lysophosphatidylserine (LPS), and lysophosphatidylglycerol (LPG). It acts by transphosphatidylation, releasing exclusively cyclic phosphate products as second products. Induces dermonecrosis, hemolysis, increased vascular permeability, edema, inflammatory response, and platelet aggregation. This is Dermonecrotic toxin SpeSicTox-betaIIA1 from Sicarius peruensis (Six-eyed sand spider).